A 276-amino-acid polypeptide reads, in one-letter code: MVESDEDFAPQEFPHTDTDVIVNEHRDENDGYASDEVGGTLSRRASSIFSINTTPLAPPNATDIQKFTSDEHHFSMMRNLHMADYITMLNGFSGFYSIVSCLRFTLTGKPHYVQRAHFFILLGMCFDFLDGRVARLRNRSSLMGQELDSLADLVSFGVAPAAIAFAIGFQTTFDVMILSFFVLCGLARLARFNVTVAQLPKDSSTGKSKYFEGLPMPTTLALVLGMAYCVRKGLIFDNIPFGIFREDQILEFHPIILVFFIHGCGMISKSLKIPKP.

The disordered stretch occupies residues 1 to 21 (MVESDEDFAPQEFPHTDTDVI). Phosphoserine is present on residues Ser-4, Ser-34, Ser-42, Ser-46, Ser-47, and Ser-50. 4 helical membrane passes run 82–102 (MADYITMLNGFSGFYSIVSCL), 163–183 (IAFAIGFQTTFDVMILSFFVL), 210–230 (YFEGLPMPTTLALVLGMAYCV), and 248–268 (QILEFHPIILVFFIHGCGMIS).

It belongs to the CDP-alcohol phosphatidyltransferase class-I family. Mn(2+) is required as a cofactor. It depends on Mg(2+) as a cofactor.

Its subcellular location is the microsome membrane. The protein localises to the endoplasmic reticulum membrane. It localises to the mitochondrion outer membrane. It catalyses the reaction a CDP-1,2-diacyl-sn-glycerol + L-serine = a 1,2-diacyl-sn-glycero-3-phospho-L-serine + CMP + H(+). It participates in phospholipid metabolism; phosphatidylethanolamine biosynthesis; phosphatidylethanolamine from CDP-diacylglycerol: step 1/2. Catalyzes the synthesis of phosphatidylserine (PtdSer). This chain is CDP-diacylglycerol--serine O-phosphatidyltransferase (CHO1), found in Saccharomyces cerevisiae (strain ATCC 204508 / S288c) (Baker's yeast).